A 458-amino-acid chain; its full sequence is ATP synthase subunit beta (458 aa).

An ATP-binding site is contributed by 148–155 (GGAGVGKT).

Belongs to the ATPase alpha/beta chains family. As to quaternary structure, F-type ATPases have 2 components, CF(1) - the catalytic core - and CF(0) - the membrane proton channel. CF(1) has five subunits: alpha(3), beta(3), gamma(1), delta(1), epsilon(1). CF(0) has three main subunits: a(1), b(2) and c(9-12). The alpha and beta chains form an alternating ring which encloses part of the gamma chain. CF(1) is attached to CF(0) by a central stalk formed by the gamma and epsilon chains, while a peripheral stalk is formed by the delta and b chains.

The protein resides in the cell inner membrane. The enzyme catalyses ATP + H2O + 4 H(+)(in) = ADP + phosphate + 5 H(+)(out). Its function is as follows. Produces ATP from ADP in the presence of a proton gradient across the membrane. The catalytic sites are hosted primarily by the beta subunits. The sequence is that of ATP synthase subunit beta from Pseudomonas fluorescens (strain SBW25).